Consider the following 653-residue polypeptide: Epithelial sodium channel subunit gamma (653 aa).

At 1–54 (MGHGRRISESIKKQLPVTGPEAPTVKNLMDWYLNNTNTHGCRRIAVSRGYLRRW) the chain is on the cytoplasmic side. Residues 55–75 (IWICFTVSSVGMIFWQWTLLL) form a helical membrane-spanning segment. The Extracellular portion of the chain corresponds to 76 to 546 (MSYYTVSVSV…GGQLGLWMSC (471 aa)). 8 disulfides stabilise this stretch: cysteine 100/cysteine 290, cysteine 214/cysteine 221, cysteine 267/cysteine 274, cysteine 379/cysteine 464, cysteine 401/cysteine 460, cysteine 405/cysteine 456, cysteine 414/cysteine 441, and cysteine 416/cysteine 430. The chain crosses the membrane as a helical span at residues 547–567 (SIVCFLEMWEVFLVDILTIIA). Over 568–653 (RYWLHRGRQW…DEQVSDTEVN (86 aa)) the chain is Cytoplasmic. The tract at residues 582–608 (KERQMQQPSPPDHDTGHHNPVCIDDED) is disordered.

This sequence belongs to the amiloride-sensitive sodium channel (TC 1.A.6) family. SCNN1G subfamily. Component of the heterotrimeric epithelial sodium channel (ENaC) composed of an alpha/SCNN1A, a beta/SCNN1B and a gamma/SCNN1G subunit. Strongly expressed in gill, liver, kidney and rectum and more weakly in heart, muscle and intestine.

It is found in the apical cell membrane. It carries out the reaction Na(+)(in) = Na(+)(out). With respect to regulation, originally identified and characterized by its inhibition by the diuretic drug amiloride. Functionally, this is one of the three pore-forming subunits of the heterotrimeric epithelial sodium channel (ENaC), a critical regulator of sodium balance and fluid homeostasis. ENaC operates in epithelial tissues, where it mediates the electrodiffusion of sodium ions from extracellular fluid through the apical membrane of cells, with water following osmotically. In Neoceratodus forsteri (Australian lungfish), this protein is Epithelial sodium channel subunit gamma.